We begin with the raw amino-acid sequence, 69 residues long: MAKATKKAEAKTVTIEQIGSPIRRPDVQQRTLIGLGLNKMHRRRTLEDTPSVRGMIRAVQHLVRIVDEK.

This sequence belongs to the universal ribosomal protein uL30 family. In terms of assembly, part of the 50S ribosomal subunit.

The protein is Large ribosomal subunit protein uL30 of Rhizobium etli (strain ATCC 51251 / DSM 11541 / JCM 21823 / NBRC 15573 / CFN 42).